The sequence spans 226 residues: uncharacterized protein (226 aa).

The protein to L.innocua lin1255, lin1742 and lin2408.

This is an uncharacterized protein from Listeria innocua serovar 6a (strain ATCC BAA-680 / CLIP 11262).